The following is a 179-amino-acid chain: Replication restart protein DnaT (179 aa).

The disordered stretch occupies residues 156-179 (GGLPKRDVNTVSEPDSQIPPGFRG).

This sequence belongs to the DnaT family. Homooligomerizes. Interacts with PriB. Component of the replication restart primosome. Primosome assembly occurs via a 'hand-off' mechanism. PriA binds to replication forks, subsequently PriB then DnaT bind; DnaT then displaces ssDNA to generate the helicase loading substrate.

In terms of biological role, involved in the restart of stalled replication forks, which reloads the replicative helicase on sites other than the origin of replication. Can function in multiple replication restart pathways. Displaces ssDNA from a PriB-ssDNA complex. Probably forms a spiral filament on ssDNA. The sequence is that of Replication restart protein DnaT from Escherichia coli O17:K52:H18 (strain UMN026 / ExPEC).